Consider the following 137-residue polypeptide: Gonadotropin subunit beta-2 (137 aa).

Residues 1-24 (MLPFMLSSFLGASPSIWPLAPAEA) form the signal peptide. Intrachain disulfides connect Cys30/Cys76, Cys44/Cys91, Cys47/Cys129, Cys55/Cys107, Cys59/Cys109, and Cys112/Cys119. An N-linked (GlcNAc...) asparagine glycan is attached at Asn34.

This sequence belongs to the glycoprotein hormones subunit beta family. In terms of assembly, heterodimer of an alpha and a beta chain.

It is found in the secreted. Involved in gametogenesis and steroidogenesis. The chain is Gonadotropin subunit beta-2 (cgbb) from Acanthopagrus latus (Yellowfin seabream).